A 556-amino-acid chain; its full sequence is Olefin beta-lactone synthetase (556 aa).

Residues 187–195 (TSGSTGVPK), 321–326 (TPYGAT), Asp-430, and Arg-445 each bind ATP.

This sequence belongs to the ATP-dependent AMP-binding enzyme family. As to quaternary structure, monomer. Forms a complex with OleB and OleD.

It localises to the cytoplasm. It catalyses the reaction a (2R,3S)-2-alkyl-3-hydroxyalkanoate + ATP = a cis-3-alkyl-4-alkyloxetan-2-one + AMP + diphosphate. In terms of biological role, involved in olefin biosynthesis. Catalyzes the conversion of 2-alkyl-3-hydroxyalkanoic acids to beta-lactones in the presence of ATP. The sequence is that of Olefin beta-lactone synthetase from Xanthomonas campestris pv. campestris (strain ATCC 33913 / DSM 3586 / NCPPB 528 / LMG 568 / P 25).